A 545-amino-acid polypeptide reads, in one-letter code: Chaperonin GroEL (545 aa).

ATP contacts are provided by residues 30 to 33 (TLGP), Lys51, 87 to 91 (DGTTT), Gly413, 477 to 479 (NAA), and Asp493.

This sequence belongs to the chaperonin (HSP60) family. Forms a cylinder of 14 subunits composed of two heptameric rings stacked back-to-back. Interacts with the co-chaperonin GroES.

The protein localises to the cytoplasm. It carries out the reaction ATP + H2O + a folded polypeptide = ADP + phosphate + an unfolded polypeptide.. Its function is as follows. Together with its co-chaperonin GroES, plays an essential role in assisting protein folding. The GroEL-GroES system forms a nano-cage that allows encapsulation of the non-native substrate proteins and provides a physical environment optimized to promote and accelerate protein folding. In Pseudomonas putida (Arthrobacter siderocapsulatus), this protein is Chaperonin GroEL.